The chain runs to 216 residues: MRLSALLALASKVTLPPHYRYGMSPPGSVADKRKNPPWIRRRPVVVEPISDEDWYLFCGDTVEILEGKDAGKQGKVVQVIRQRNWVVVGGLNTHYRYIGKTMDYRGTMIPSEAPLLHRQVKLVDPMDRKPTEIEWRFTEAGERVRVSTRSGRIIPKPEFPRADGIVPETWIDGPKDTSVEDALERTYVPCLKTLQEEVMEAMGIKETRKYKKVYWY.

The N-terminal 9 residues, 1–9, are a transit peptide targeting the mitochondrion; that stretch reads MRLSALLAL. Phosphoserine is present on Ser-24. A KOW domain is found at 56–89; the sequence is LFCGDTVEILEGKDAGKQGKVVQVIRQRNWVVVG.

This sequence belongs to the universal ribosomal protein uL24 family. As to quaternary structure, component of the mitochondrial large ribosomal subunit (mt-LSU). Mature mammalian 55S mitochondrial ribosomes consist of a small (28S) and a large (39S) subunit. The 28S small subunit contains a 12S ribosomal RNA (12S mt-rRNA) and 30 different proteins. The 39S large subunit contains a 16S rRNA (16S mt-rRNA), a copy of mitochondrial valine transfer RNA (mt-tRNA(Val)), which plays an integral structural role, and 52 different proteins.

It is found in the mitochondrion. The sequence is that of Large ribosomal subunit protein uL24m (MRPL24) from Homo sapiens (Human).